Here is a 250-residue protein sequence, read N- to C-terminus: Probable transcriptional regulatory protein DP2908 (250 aa).

The protein belongs to the TACO1 family.

The protein resides in the cytoplasm. This chain is Probable transcriptional regulatory protein DP2908, found in Desulfotalea psychrophila (strain LSv54 / DSM 12343).